Reading from the N-terminus, the 252-residue chain is Flagellar brake protein YcgR (252 aa).

Positions 118–236 (QRREYFRVSI…EKGLQRAIFE (119 aa)) constitute a PilZ domain.

This sequence belongs to the YcgR family. As to quaternary structure, monomer. Interacts with the flagellar basal bodies.

The protein localises to the bacterial flagellum basal body. In terms of biological role, acts as a flagellar brake, regulating swimming and swarming in a bis-(3'-5') cyclic diguanylic acid (c-di-GMP)-dependent manner. Binds 1 c-di-GMP dimer per subunit. Increasing levels of c-di-GMP lead to decreased motility. The protein is Flagellar brake protein YcgR of Yersinia pseudotuberculosis serotype I (strain IP32953).